Consider the following 322-residue polypeptide: Hydroxypyruvate reductase (322 aa).

Residues 160 to 161 (RI), Asp180, 211 to 212 (CP), 238 to 240 (NSR), and Asp264 contribute to the NAD(+) site. Arg240 is a catalytic residue. The active site involves Glu269. The active-site Proton donor is His288.

It belongs to the D-isomer specific 2-hydroxyacid dehydrogenase family.

It carries out the reaction (R)-glycerate + NAD(+) = 3-hydroxypyruvate + NADH + H(+). Its pathway is carbohydrate metabolism. Involved in catabolism of D-apiose. Catalyzes the reduction of 3-hydroxypyruvate to glycerate. This chain is Hydroxypyruvate reductase, found in Blautia hydrogenotrophica (strain DSM 10507 / JCM 14656 / S5a33) (Ruminococcus hydrogenotrophicus).